The chain runs to 303 residues: Methionine import ATP-binding protein MetN (303 aa).

Residues 1-222 (MLDQISLEIP…PDPKMRHFLG (222 aa)) form the ABC transporter domain. 19-26 (GHSGAGKS) is a binding site for ATP.

Belongs to the ABC transporter superfamily. Methionine importer (TC 3.A.1.24) family. In terms of assembly, the complex is composed of two ATP-binding proteins (MetN), two transmembrane proteins (MetI) and a solute-binding protein (MetQ).

It is found in the cell inner membrane. The enzyme catalyses L-methionine(out) + ATP + H2O = L-methionine(in) + ADP + phosphate + H(+). It catalyses the reaction D-methionine(out) + ATP + H2O = D-methionine(in) + ADP + phosphate + H(+). Part of the ABC transporter complex MetNIQ involved in methionine import. Responsible for energy coupling to the transport system. In Wolinella succinogenes (strain ATCC 29543 / DSM 1740 / CCUG 13145 / JCM 31913 / LMG 7466 / NCTC 11488 / FDC 602W) (Vibrio succinogenes), this protein is Methionine import ATP-binding protein MetN.